The chain runs to 247 residues: Aspartate/glutamate leucyltransferase (247 aa).

Belongs to the R-transferase family. Bpt subfamily.

Its subcellular location is the cytoplasm. It catalyses the reaction N-terminal L-glutamyl-[protein] + L-leucyl-tRNA(Leu) = N-terminal L-leucyl-L-glutamyl-[protein] + tRNA(Leu) + H(+). It carries out the reaction N-terminal L-aspartyl-[protein] + L-leucyl-tRNA(Leu) = N-terminal L-leucyl-L-aspartyl-[protein] + tRNA(Leu) + H(+). Its function is as follows. Functions in the N-end rule pathway of protein degradation where it conjugates Leu from its aminoacyl-tRNA to the N-termini of proteins containing an N-terminal aspartate or glutamate. The chain is Aspartate/glutamate leucyltransferase from Chromohalobacter salexigens (strain ATCC BAA-138 / DSM 3043 / CIP 106854 / NCIMB 13768 / 1H11).